Consider the following 209-residue polypeptide: Large ribosomal subunit protein uL3 (209 aa).

Residues 130 to 162 (RGPMTHGSKFKRAPGSMGASSDPSRTFKNKRMP) are disordered.

The protein belongs to the universal ribosomal protein uL3 family. Part of the 50S ribosomal subunit. Forms a cluster with proteins L14 and L19.

One of the primary rRNA binding proteins, it binds directly near the 3'-end of the 23S rRNA, where it nucleates assembly of the 50S subunit. In Clostridium botulinum (strain Alaska E43 / Type E3), this protein is Large ribosomal subunit protein uL3.